Here is a 32-residue protein sequence, read N- to C-terminus: GSPIQCAETCFIGKCYTEELGCTCTAFLCMKN.

Residues 1–32 constitute a cross-link (cyclopeptide (Gly-Asn)); that stretch reads GSPIQCAETCFIGKCYTEELGCTCTAFLCMKN. Cystine bridges form between C6–C22, C10–C24, and C15–C29.

Belongs to the cyclotide family. Moebius subfamily. This is a cyclic peptide.

Functionally, probably participates in a plant defense mechanism. The polypeptide is Cyclotide Hyfl-B (Hybanthus floribundus (Greenviolet)).